The following is a 664-amino-acid chain: Probable 3',5'-cyclic phosphodiesterase pde-1 (664 aa).

Disordered stretches follow at residues 24–60 (TSSA…SIKI) and 113–142 (RNQK…KSYD). Basic and acidic residues-rich tracts occupy residues 28–38 (SEEHGDSDKKL) and 114–130 (NQKE…EKEP). Residues 256-634 (VQCPIPPEIA…AHWKERAAKE (379 aa)) form the PDEase domain. The Proton donor role is filled by His333. A divalent metal cation-binding residues include His337, His373, Asp374, and Asp480. 2 disordered regions span residues 564–597 (DSLF…TSPS) and 630–664 (RAAK…VTTN). A compositionally biased stretch (basic and acidic residues) spans 630-644 (RAAKEEEERKIKEAA).

Belongs to the cyclic nucleotide phosphodiesterase family. Interacts with cmd-1 in the presence of Ca(2+). It depends on a divalent metal cation as a cofactor. Expressed in AFD thermosensory neurons.

It carries out the reaction a nucleoside 3',5'-cyclic phosphate + H2O = a nucleoside 5'-phosphate + H(+). In terms of biological role, redundantly with pde-5, plays a role in the AFD thermosensory neurons to regulate microvilli receptive ending morphology, possibly by regulating cGMP levels. The chain is Probable 3',5'-cyclic phosphodiesterase pde-1 (pde-1) from Caenorhabditis elegans.